The following is a 308-amino-acid chain: Ornithine carbamoyltransferase (308 aa).

Residues 57 to 60, glutamine 84, arginine 108, and 135 to 138 contribute to the carbamoyl phosphate site; these read STRT and HPCQ. L-ornithine is bound by residues asparagine 166, aspartate 224, and 228–229; that span reads SM. Carbamoyl phosphate contacts are provided by residues 264–265 and arginine 292; that span reads CL.

It belongs to the aspartate/ornithine carbamoyltransferase superfamily. OTCase family.

It localises to the cytoplasm. It carries out the reaction carbamoyl phosphate + L-ornithine = L-citrulline + phosphate + H(+). It participates in amino-acid degradation; L-arginine degradation via ADI pathway; carbamoyl phosphate from L-arginine: step 2/2. Functionally, reversibly catalyzes the transfer of the carbamoyl group from carbamoyl phosphate (CP) to the N(epsilon) atom of ornithine (ORN) to produce L-citrulline. The sequence is that of Ornithine carbamoyltransferase from Ralstonia pickettii (strain 12J).